Reading from the N-terminus, the 179-residue chain is ATP synthase subunit delta (179 aa).

It belongs to the ATPase delta chain family. In terms of assembly, F-type ATPases have 2 components, F(1) - the catalytic core - and F(0) - the membrane proton channel. F(1) has five subunits: alpha(3), beta(3), gamma(1), delta(1), epsilon(1). F(0) has three main subunits: a(1), b(2) and c(10-14). The alpha and beta chains form an alternating ring which encloses part of the gamma chain. F(1) is attached to F(0) by a central stalk formed by the gamma and epsilon chains, while a peripheral stalk is formed by the delta and b chains.

The protein localises to the cell membrane. Functionally, f(1)F(0) ATP synthase produces ATP from ADP in the presence of a proton or sodium gradient. F-type ATPases consist of two structural domains, F(1) containing the extramembraneous catalytic core and F(0) containing the membrane proton channel, linked together by a central stalk and a peripheral stalk. During catalysis, ATP synthesis in the catalytic domain of F(1) is coupled via a rotary mechanism of the central stalk subunits to proton translocation. In terms of biological role, this protein is part of the stalk that links CF(0) to CF(1). It either transmits conformational changes from CF(0) to CF(1) or is implicated in proton conduction. The sequence is that of ATP synthase subunit delta from Staphylococcus haemolyticus (strain JCSC1435).